The following is a 114-amino-acid chain: MTSTSVYFNDYYNRRASSSKLELCMSPSSSTISKSHSLDEIPDVSARRRHPSLGFLEFSKTANFRSRRDAVFEPLEFQRVLVTVTSAQIVESSQKRKPEESTIGMDAPKKMKRG.

The interval 90–114 is disordered; that stretch reads VESSQKRKPEESTIGMDAPKKMKRG.

This is an uncharacterized protein from Caenorhabditis elegans.